The following is a 216-amino-acid chain: Nucleoid occlusion factor SlmA (216 aa).

Residues 1–23 (MAEQLTLDSIEPEPEKQSAKIEK) are disordered. A compositionally biased stretch (basic and acidic residues) spans 13–23 (EPEKQSAKIEK). The region spanning 28–88 (ERRQQVLTVL…ALIENIESSL (61 aa)) is the HTH tetR-type domain. The H-T-H motif DNA-binding region spans 51–70 (TTARLAKEVGVSEAALYRYF).

This sequence belongs to the nucleoid occlusion factor SlmA family. In terms of assembly, homodimer. Interacts with FtsZ.

The protein localises to the cytoplasm. It localises to the nucleoid. Functionally, required for nucleoid occlusion (NO) phenomenon, which prevents Z-ring formation and cell division over the nucleoid. Acts as a DNA-associated cell division inhibitor that binds simultaneously chromosomal DNA and FtsZ, and disrupts the assembly of FtsZ polymers. SlmA-DNA-binding sequences (SBS) are dispersed on non-Ter regions of the chromosome, preventing FtsZ polymerization at these regions. This Mannheimia succiniciproducens (strain KCTC 0769BP / MBEL55E) protein is Nucleoid occlusion factor SlmA.